Here is a 376-residue protein sequence, read N- to C-terminus: 2-oxoglutarate synthase subunit KorA (376 aa).

As to quaternary structure, heterotetramer of the KorA, KorB, KorC and KorD subunits.

The enzyme catalyses 2 oxidized [2Fe-2S]-[ferredoxin] + 2-oxoglutarate + CoA = succinyl-CoA + 2 reduced [2Fe-2S]-[ferredoxin] + CO2 + H(+). The sequence is that of 2-oxoglutarate synthase subunit KorA (korA) from Methanothermobacter thermautotrophicus (strain ATCC 29096 / DSM 1053 / JCM 10044 / NBRC 100330 / Delta H) (Methanobacterium thermoautotrophicum).